A 325-amino-acid polypeptide reads, in one-letter code: Large ribosomal subunit protein uL4m (325 aa).

Residues 113 to 158 (ASTKTRYEVHGSHKKMSPQKGTGNARRGTRQSPLMKGGGKTFGPKP) form a disordered region.

The protein belongs to the universal ribosomal protein uL4 family. As to quaternary structure, component of the mitochondrial large ribosomal subunit (mt-LSU). Mature N.crassa 74S mitochondrial ribosomes consist of a small (37S) and a large (54S) subunit. The 37S small subunit contains a 16S ribosomal RNA (16S mt-rRNA) and 32 different proteins. The 54S large subunit contains a 23S rRNA (23S mt-rRNA) and 42 different proteins.

It localises to the mitochondrion. Its function is as follows. Component of the mitochondrial ribosome (mitoribosome), a dedicated translation machinery responsible for the synthesis of mitochondrial genome-encoded proteins, including at least some of the essential transmembrane subunits of the mitochondrial respiratory chain. The mitoribosomes are attached to the mitochondrial inner membrane and translation products are cotranslationally integrated into the membrane. The protein is Large ribosomal subunit protein uL4m (yml6) of Neurospora crassa (strain ATCC 24698 / 74-OR23-1A / CBS 708.71 / DSM 1257 / FGSC 987).